The primary structure comprises 310 residues: Ribosomal protein uL3 glutamine methyltransferase (310 aa).

It belongs to the protein N5-glutamine methyltransferase family. PrmB subfamily.

The catalysed reaction is L-glutaminyl-[ribosomal protein uL3] + S-adenosyl-L-methionine = N(5)-methyl-L-glutaminyl-[ribosomal protein uL3] + S-adenosyl-L-homocysteine + H(+). Its function is as follows. Methylates large ribosomal subunit protein uL3 on a specific glutamine residue. In Aliivibrio fischeri (strain ATCC 700601 / ES114) (Vibrio fischeri), this protein is Ribosomal protein uL3 glutamine methyltransferase.